We begin with the raw amino-acid sequence, 1190 residues long: MDGWSEVLRIPSSVFATDNYNNPTTIVNITSLQFDSVQNFIWCGDSRGYTRSFTGSFATNSLYGNLQLYPYTKFHTSDVNYNNPIKQILSHREGILSLSNNAISFNSRRGLSKLQVTSKTFNNNATTENKFNNLQAMTFNCNSFNDVVVGTDTSMMKFDLNKPNVLSSFDHQGGISLLNNLGKFLTIANSNGSLDIFDPVSNSTMKTFSAHNGFISNLDVRGNYIATCGYSIKPKRYYHNQPAEYIVDPLVNIYDTRIMRAIAPVPFPAGAASVKFHPKLPNIIIIASTSGQMQFVDIFDQTNVYLYQADLAIPTTTTTTINNKPRMSNLEISENGDFLVFNDNCDNMHLWSISPSSKDFVNFPQPVEQPDIIDSNFEIIDIDANVPLSIVGMPYYKELLLSNYPNDLRFVKETAKLPEPIDIELILENETRNNGTKKFFPYDKLKYGPGNVYKPYQSLKDNKENKEISIPKFISERSTTTTTTTKELKADNDGKFIDDSIFQYKFQGKLNKVPNCYSRLQIQYSKFGIKDFDFSYYNKTKECCGLENHTDNSYINSLLQLYRFQSSIYNQVVGSLSKEWLPNDITTIITTNNPEGSSILNELGYLFDMMFKAQSNNVKIYNLSQVLNHHPNAQKLLNNNELLNLNSQQVRDLVIEFNNFLLTTLHQDFQTQFQENFNLTELKYEIEIKGNGTSCPMYDKHQGSMFSLELITPPSNMLNKMSILINNNNNNNNPQYQPEPISSLDNIRRNLNILTYLEYSMNQYKTIPCQQHNHSYPHNLEIQTSIVHLPSVLTINVNLSNPEFKIINNFTQWLVPEFYAVKSKSISGKNGYSFKEIDHPTPNSATQESGKYKYKYELLGYVCEINHQSDIVSGAHNLVAFIKVNNNGGWYLFNDFLVMPIPEEEVFDLQPSWKKPIVIMYQQTNQPSFNYLTTTTTTTTTTTTFSNAGKYDDSILYRDHFAEGIRKGHQLEYELLTRKESPQPGSLVAIDAEFVMLKPEELEIHYDGYKKLIKPKQLSLARISVLRENGIPFIDDYIVHTSDIYDYLTNFSGIEPNDLNLTLSNRENLVTLQTAYRKLWLLLNLGVIFVGHGLYNDFRTINLQVPERQIRDTAVIYYKSDFKRQLSLKFLAYVMLKEKVQSGNHDSIEDANTALLLYKKYQNLYNKEDFESILNYIYSEGQQLRFKVPE.

WD repeat units follow at residues 24–63, 129–166, 167–207, 222–264, 266–306, and 322–361; these read TTIVNITSLQFDSVQNFIWCGDSRGYTRSFTGSFATNSLY, NKFNNLQAMTFNCNSFNDVVVGTDTSMMKFDLNKPNVL, SSFD…TMKT, GNYI…AIAP, PFPA…NVYL, and NNKPRMSNLEISENGDFLVFNDNCDNMHLWSISPSSKDFV. The tract at residues 364 to 511 is linker; the sequence is PQPVEQPDII…FQYKFQGKLN (148 aa). The region spanning 512–924 is the USP domain; sequence KVPNCYSRLQ…KPIVIMYQQT (413 aa). An Exonuclease domain is found at 988–1158; sequence VAIDAEFVML…EDANTALLLY (171 aa). Positions 991, 993, 1097, and 1150 each coordinate a divalent metal cation.

This sequence belongs to the peptidase C19 family. PAN2 subfamily. Forms a heterotrimer with an asymmetric homodimer of the regulatory subunit PAN3 to form the poly(A)-nuclease (PAN) deadenylation complex. A divalent metal cation is required as a cofactor.

The protein resides in the cytoplasm. It carries out the reaction Exonucleolytic cleavage of poly(A) to 5'-AMP.. Positively regulated by the regulatory subunit PAN3. In terms of biological role, catalytic subunit of the poly(A)-nuclease (PAN) deadenylation complex, one of two cytoplasmic mRNA deadenylases involved in mRNA turnover. PAN specifically shortens poly(A) tails of RNA and the activity is stimulated by poly(A)-binding protein PAB1. PAN deadenylation is followed by rapid degradation of the shortened mRNA tails by the CCR4-NOT complex. Deadenylated mRNAs are then degraded by two alternative mechanisms, namely exosome-mediated 3'-5' exonucleolytic degradation, or deadenylation-dependent mRNA decaping and subsequent 5'-3' exonucleolytic degradation by XRN1. May also be involved in post-transcriptional maturation of mRNA poly(A) tails. This is PAN2-PAN3 deadenylation complex catalytic subunit PAN2 from Candida albicans (strain SC5314 / ATCC MYA-2876) (Yeast).